A 343-amino-acid chain; its full sequence is UPF0284 protein Msed_0735 (343 aa).

Belongs to the UPF0284 family.

The polypeptide is UPF0284 protein Msed_0735 (Metallosphaera sedula (strain ATCC 51363 / DSM 5348 / JCM 9185 / NBRC 15509 / TH2)).